Here is a 35-residue protein sequence, read N- to C-terminus: Non-specific lipid-transfer protein 1 (35 aa).

Cysteines 13 and 28 form a disulfide.

In terms of tissue distribution, seeds.

Plant non-specific lipid-transfer proteins transfer phospholipids as well as galactolipids across membranes. May play a role in wax or cutin deposition in the cell walls of expanding epidermal cells and certain secretory tissues. Inhibits the growth of F.oxysporum and P.infestans. The polypeptide is Non-specific lipid-transfer protein 1 (Nigella sativa (Black cumin)).